A 902-amino-acid polypeptide reads, in one-letter code: Nuclear factor of activated T-cells, cytoplasmic 4 (902 aa).

2 disordered regions span residues 16 to 180 and 208 to 369; these read VFGE…SSWS and RFGL…GGSR. Residues 50–81 are compositionally biased toward pro residues; it reads EPPPYGAAPIGIPRPPPPRPGMHSPPPRPAPS. The span at 96–109 shows a compositional bias: gly residues; the sequence is GGPGGGAGGAGGGR. The tract at residues 114 to 119 is calcineurin-binding; sequence PSIRIT. Over residues 151 to 165 the composition is skewed to gly residues; that stretch reads GFGGYREAGGQGGGA. A compositionally biased stretch (low complexity) spans 166 to 180; it reads FFSPSPGSSSLSSWS. Phosphoserine; by MAPK7 and MAPK14 is present on residues Ser168 and Ser170. A phosphoserine; by MAPK8 and MAPK9 mark is found at Ser213 and Ser217. The stretch at 213–229 is one SP 1 repeat; sequence SPLPSPRASPRPWTPED. The interval 213 to 293 is 2 approximate SP repeats; it reads SPLPSPRASP…LSRRGSLGEE (81 aa). Pro residues-rich tracts occupy residues 215-227 and 254-263; these read LPSP…PWTP and GPTPASPRPA. The Nuclear localization signal motif lies at 268–270; it reads KRR. Positions 272–288 are enriched in low complexity; sequence SSSGTPSSASPALSRRG. The SP 2; approximate repeat unit spans residues 277 to 293; sequence PSSASPALSRRGSLGEE. Phosphoserine; by RPS6KA3 is present on residues Ser289 and Ser344. Residues 401 to 582 enclose the RHD domain; sequence SALPPLDWPL…VPIECSQRSA (182 aa). Residues 430–437 mediate DNA binding; the sequence is RAHYETEG. In terms of domain architecture, IPT/TIG spans 586–683; the sequence is PQVEAYSPSA…KRSPTQSFRF (98 aa). Positions 672–674 match the Nuclear localization signal motif; that stretch reads RRK. A Glycyl lysine isopeptide (Lys-Gly) (interchain with G-Cter in SUMO2) cross-link involves residue Lys689. Positions 791 to 870 are disordered; the sequence is PYGGRGSSFS…GGYSSGFRDS (80 aa). The span at 805–824 shows a compositional bias: pro residues; the sequence is FSPPAPFRPPPLPASPPLEG.

As to quaternary structure, member of the multicomponent NFATC transcription complex that consists of at least two components, a pre-existing cytoplasmic component NFATC2 and an inducible nuclear component NFATC1. Other NFAT proteins, such as NFATC3, or members of the activating protein-1 (AP-1) family and MAF can also bind the complex. NFAT proteins can bind DNA as monomers or dimers. Component of a promoter-binding complex composed of STAT3, NFATC3 and NFATC4; complex formation is enhanced by calcineurin. Interacts with CREBBP; this interaction potentiates transcription activation. Interacts with MAPK8/JNK1 and MAPK9/JNK2. Interacts with GATA4 (via the second Zn finger). Interacts (via N-terminus) with IRAK1 (via C-terminus). Interacts with RPS6KA3. Interacts with HOMER1, HOMER2 and HOMER3; this interaction competes with calcineurin/PPP3CA-binding and hence prevents NFATC4 dephosphorylation and activation. Interacts with ESR1 and ESR2; this interaction decreases NFATC4 transcriptional activity. Interacts with MTOR and MAPK7/ERK5. Interacts with TRIM17; this interaction prevents NFATC3 nuclear localization. Interacts with TCF25 (via C-terminus); the interaction leads to suppression of NFATC4 transcription factor activity and is reduced following stimulation with angiotensin-2. Post-translationally, phosphorylated by NFATC-kinases; dephosphorylated by calcineurin/PPP3CA. Phosphorylated on Ser-168 and Ser-170 by MTOR, IRAK1, MAPK7/ERK5 and MAPK14/p38, on Ser-213 and Ser-217 by MAPK8/JNK1 and MAPK9/JNK2, and on Ser-289 and Ser-344 by RPS6KA3. Phosphorylated by GSK3B. Phosphorylation by GSK3B markedly increases NFATC4 ubiquitination. Phosphorylation at Ser-168 and Ser-170 is stimulated by UV irradiation. Phosphorylation determines subcellular location: the hyperphosphorylated protein is cytosolic, while the dephosphorylated form is targeted to the nucleus. In terms of processing, ubiquitinated, leading to degradation by the proteasome. Ubiquitination may be stimulated by GSK3B-dependent phosphorylation. Polyubiquitin linkage mainly occurs through 'Lys-48'. Widely expressed, with high levels in placenta, lung, kidney, testis and ovary. Weakly expressed in spleen and thymus. In the hippocampus, expressed in the granular layer of the dentate gyrus, in the pyramidal neurons of CA3 region, and in the hippocampal fissure. Expressed in the heart (at protein level).

The protein localises to the cytoplasm. It localises to the nucleus. Transcriptional activity may be repressed by ESR1 and ESR2. Functionally, ca(2+)-regulated transcription factor that is involved in several processes, including the development and function of the immune, cardiovascular, musculoskeletal, and nervous systems. Involved in T-cell activation, stimulating the transcription of cytokine genes, including that of IL2 and IL4. Along with NFATC3, involved in embryonic heart development. Following JAK/STAT signaling activation and as part of a complex with NFATC3 and STAT3, binds to the alpha-beta E4 promoter region of CRYAB and activates transcription in cardiomyocytes. Involved in mitochondrial energy metabolism required for cardiac morphogenesis and function. Transactivates many genes involved in the cardiovascular system, including AGTR2, NPPB/BNP (in synergy with GATA4), NPPA/ANP/ANF and MYH7/beta-MHC. Involved in the regulation of adult hippocampal neurogenesis. Involved in BDNF-driven pro-survival signaling in hippocampal adult-born neurons. Involved in the formation of long-term spatial memory and long-term potentiation. In cochlear nucleus neurons, may play a role in deafferentation-induced apoptosis during the developmental critical period, when auditory neurons depend on afferent input for survival. Binds to and activates the BACE1/Beta-secretase 1 promoter, hence may regulate the proteolytic processing of the amyloid precursor protein (APP). Plays a role in adipocyte differentiation. May be involved in myoblast differentiation into myotubes. Binds the consensus DNA sequence 5'-GGAAAAT-3'. In the presence of CREBBP, activates TNF transcription. Binds to PPARG gene promoter and regulates its activity. Binds to PPARG and REG3G gene promoters. This is Nuclear factor of activated T-cells, cytoplasmic 4 (NFATC4) from Homo sapiens (Human).